A 319-amino-acid chain; its full sequence is MITSFESIEKKNAVYYPVDLKFVTDLSSDLSNTADGLGQAWYKISQVAVEHIILTALKINYVLNHRTLLLIYNKKVPDMDLINIIQSSIMVPRFVRDLIREILRPMHHSGITYIPDLDLSTRPTPHLLDTFYPIAEHLTRWNNVCQKLGFEMVPILPEAVQSVSLTFYSYETDELLSFDNLINLDWRIEAFGWTKHLVHNPTSEVDELGKSQTATSRKRVQEKDYECDDFRKVYERPLQNRRILGMIVYRYTCAPYTMRLGHLSPNCRFPTEKNHSETPPTSNRVLLSEQTMVHSIQKNRSKPKKVKIVTTECSADRSH.

Its subcellular location is the virion. Its function is as follows. The capsid protein self-assembles to form an icosahedral capsid with a T=2 symmetry made of 120 subunits. In Cryptosporidium parvum virus 1 (strain KSU-1), this protein is Capsid protein.